Consider the following 136-residue polypeptide: ATP synthase epsilon chain (136 aa).

Belongs to the ATPase epsilon chain family. F-type ATPases have 2 components, CF(1) - the catalytic core - and CF(0) - the membrane proton channel. CF(1) has five subunits: alpha(3), beta(3), gamma(1), delta(1), epsilon(1). CF(0) has three main subunits: a, b and c.

Its subcellular location is the cell membrane. Its function is as follows. Produces ATP from ADP in the presence of a proton gradient across the membrane. The protein is ATP synthase epsilon chain of Exiguobacterium sp. (strain ATCC BAA-1283 / AT1b).